Consider the following 439-residue polypeptide: O-methyltransferase aurJ (439 aa).

D283 contacts S-adenosyl-L-methionine. The active-site Proton acceptor is H338.

The protein belongs to the class I-like SAM-binding methyltransferase superfamily. Cation-independent O-methyltransferase family. COMT subfamily.

The catalysed reaction is norrubrofusarin + S-adenosyl-L-methionine = rubrofusarin + S-adenosyl-L-homocysteine + H(+). The protein operates within pigment biosynthesis. O-methyltransferase; part of the gene cluster that mediates the biosynthesis of aurofusarin, a red mycelium pigment which is acting as a mycotoxin. The first step is performed by the polyketide synthase which condenses one acetyl-CoA and 6 malonyl-CoA units to form the first intermediate, the cyclic heptaketide and yellow pigment YWA1. The C2 hydroxyl group in the pyrone ring of YWA1 is probably formed during ring closure by an aldol-type cyclization reaction. The dehydratase aurZ then acts as the first tailoring enzyme in the aurofusarin biosynthetic pathway by converting YWA1 to nor-rubrofusarin. Nor-rubrofusarin is then methylated to rubrofusarin by the O-methyltransferase aurJ. Rubrofusarin is then transported across the plasma membrane by the rubrofusarin-specific pump aurT for further enzymatic processing by the extracellular complex composed of GIP1, aurF, aurO and aurS to yield aurofusarin. This is O-methyltransferase aurJ from Gibberella zeae (strain ATCC MYA-4620 / CBS 123657 / FGSC 9075 / NRRL 31084 / PH-1) (Wheat head blight fungus).